The following is a 330-amino-acid chain: Stimulated by retinoic acid gene 8 protein homolog (330 aa).

Residues 50–55 (RVARRR) carry the Nuclear localization signal (NLS) motif. Positions 88-112 (QVLNKAKSHIPELEQTLDNLLKLKA) form a coiled coil.

As to quaternary structure, interacts with XPO1. Interacts with MEIOSIN. In terms of processing, phosphorylated. Expressed specifically in testis and fetal ovaries.

The protein resides in the cytoplasm. Its subcellular location is the nucleus. Meiosis-inducer required for the transition into meiosis for both female and male germ cells. In female germ cells, acts downstream of ZGLP1 as a key effector of the meiotic program: required for premeiotic DNA replication and subsequent events in meiotic prophase. During spermatogenesis, next to its role in meiotic initiation, promotes (but is not required for) spermatogonial differentiation. In complex with MEIOSIN, directly activates the transcription of a subset of critical meiotic genes playing a central role in cell-cycle switching from mitosis to meiosis. The protein is Stimulated by retinoic acid gene 8 protein homolog of Homo sapiens (Human).